A 570-amino-acid polypeptide reads, in one-letter code: Sulfite reductase [NADPH] hemoprotein beta-component (570 aa).

Cys-434, Cys-440, Cys-479, and Cys-483 together coordinate [4Fe-4S] cluster. Cys-483 provides a ligand contact to siroheme.

It belongs to the nitrite and sulfite reductase 4Fe-4S domain family. Alpha(8)-beta(8). The alpha component is a flavoprotein, the beta component is a hemoprotein. Siroheme serves as cofactor. The cofactor is [4Fe-4S] cluster.

The enzyme catalyses hydrogen sulfide + 3 NADP(+) + 3 H2O = sulfite + 3 NADPH + 4 H(+). Its pathway is sulfur metabolism; hydrogen sulfide biosynthesis; hydrogen sulfide from sulfite (NADPH route): step 1/1. Functionally, component of the sulfite reductase complex that catalyzes the 6-electron reduction of sulfite to sulfide. This is one of several activities required for the biosynthesis of L-cysteine from sulfate. The polypeptide is Sulfite reductase [NADPH] hemoprotein beta-component (Shigella sonnei (strain Ss046)).